Here is a 167-residue protein sequence, read N- to C-terminus: NAD(P)H-quinone oxidoreductase subunit J (167 aa).

It belongs to the complex I 30 kDa subunit family. NDH-1 can be composed of about 15 different subunits; different subcomplexes with different compositions have been identified which probably have different functions.

The protein resides in the cellular thylakoid membrane. It carries out the reaction a plastoquinone + NADH + (n+1) H(+)(in) = a plastoquinol + NAD(+) + n H(+)(out). The catalysed reaction is a plastoquinone + NADPH + (n+1) H(+)(in) = a plastoquinol + NADP(+) + n H(+)(out). Functionally, NDH-1 shuttles electrons from an unknown electron donor, via FMN and iron-sulfur (Fe-S) centers, to quinones in the respiratory and/or the photosynthetic chain. The immediate electron acceptor for the enzyme in this species is believed to be plastoquinone. Couples the redox reaction to proton translocation, and thus conserves the redox energy in a proton gradient. Cyanobacterial NDH-1 also plays a role in inorganic carbon-concentration. The protein is NAD(P)H-quinone oxidoreductase subunit J of Trichodesmium erythraeum (strain IMS101).